The chain runs to 303 residues: Peroxisomal trans-2-enoyl-CoA reductase (303 aa).

Residue 23–47 (VTGGATGIGKAIVKELLELGSNVVI) coordinates NADP(+). Lys-32 is subject to N6-succinyllysine. Phosphoserine is present on Ser-49. Tyr-179 acts as the Proton acceptor in catalysis. Tyr-179 is subject to Phosphotyrosine. The Microbody targeting signal signature appears at 301-303 (AKL).

This sequence belongs to the short-chain dehydrogenases/reductases (SDR) family. As to quaternary structure, interacts with PEX5, probably required to target it into peroxisomes.

It localises to the peroxisome. The catalysed reaction is a (2E)-enoyl-CoA + NADPH + H(+) = a 2,3-saturated acyl-CoA + NADP(+). It carries out the reaction (2E)-decenoyl-CoA + NADPH + H(+) = decanoyl-CoA + NADP(+). It catalyses the reaction (2E)-hexenoyl-CoA + NADPH + H(+) = hexanoyl-CoA + NADP(+). The enzyme catalyses (2E)-octenoyl-CoA + NADPH + H(+) = octanoyl-CoA + NADP(+). The catalysed reaction is (2E)-dodecenoyl-CoA + NADPH + H(+) = dodecanoyl-CoA + NADP(+). It carries out the reaction (2E)-tetradecenoyl-CoA + NADPH + H(+) = tetradecanoyl-CoA + NADP(+). It participates in lipid metabolism; fatty acid biosynthesis. Participates in chain elongation of fatty acids. Catalyzes the reduction of trans-2-enoyl-CoAs of varying chain lengths from 6:1 to 16:1, having maximum activity with 10:1 CoA. Has no 2,4-dienoyl-CoA reductase activity. This is Peroxisomal trans-2-enoyl-CoA reductase from Homo sapiens (Human).